Here is a 169-residue protein sequence, read N- to C-terminus: UPF0398 protein Spy49_1277c (169 aa).

This sequence belongs to the UPF0398 family.

This Streptococcus pyogenes serotype M49 (strain NZ131) protein is UPF0398 protein Spy49_1277c.